A 473-amino-acid polypeptide reads, in one-letter code: Putative protein TIC 214 C-terminal part (473 aa).

Belongs to the TIC214 family. In terms of assembly, part of the Tic complex.

The protein localises to the plastid. It localises to the chloroplast. Its function is as follows. Involved in protein precursor import into chloroplasts. May be part of an intermediate translocation complex acting as a protein-conducting channel at the inner envelope. This is Putative protein TIC 214 C-terminal part from Anthoceros angustus (Hornwort).